Here is a 138-residue protein sequence, read N- to C-terminus: Protein X (138 aa).

Residues 24–48 (ESGGPAVSRPSAGSASRADSPLPSA) are disordered. The interval 68 to 113 (PCCLGFTCAEFGAMVSTMNFVTWHAKRQLGMPTKDLWTPYVRNQLL) is mitochondrial targeting sequence.

The protein belongs to the orthohepadnavirus protein X family. May form homodimer. May interact with host CEBPA, CFLAR, CREB1, DDB1, E4F1, HBXIP, HSPD1/HSP60, NFKBIA, POLR2E and SMAD4. Interacts with host SMC5-SMC6 complex and induces its degradation. Interacts with host TRPC4AP; leading to prevent ubiquitination of TRPC4AP. Interacts with host PLSCR1; this interaction promotes ubiquitination and degradation of HBx and impairs HBx-mediated cell proliferation. In terms of processing, a fraction may be phosphorylated in insect cells and HepG2 cells, a human hepatoblastoma cell line. Phosphorylated in vitro by host protein kinase C or mitogen-activated protein kinase. N-acetylated in insect cells.

Its subcellular location is the host cytoplasm. It is found in the host nucleus. It localises to the host mitochondrion. Multifunctional protein that plays a role in silencing host antiviral defenses and promoting viral transcription. Does not seem to be essential for HBV infection. May be directly involved in development of cirrhosis and liver cancer (hepatocellular carcinoma). Most of cytosolic activities involve modulation of cytosolic calcium. The effect on apoptosis is controversial depending on the cell types in which the studies have been conducted. May induce apoptosis by localizing in mitochondria and causing loss of mitochondrial membrane potential. May also modulate apoptosis by binding host CFLAR, a key regulator of the death-inducing signaling complex (DISC). Promotes viral transcription by using the host E3 ubiquitin ligase DDB1 to target the SMC5-SMC6 complex to proteasomal degradation. This host complex would otherwise bind to viral episomal DNA, and prevents its transcription. Moderately stimulates transcription of many different viral and cellular transcription elements. Promoters and enhancers stimulated by HBx contain DNA binding sites for NF-kappa-B, AP-1, AP-2, c-EBP, ATF/CREB, or the calcium-activated factor NF-AT. The protein is Protein X of Arctic squirrel hepatitis virus (ASHV).